The chain runs to 352 residues: UDP-N-acetylglucosamine--N-acetylmuramyl-(pentapeptide) pyrophosphoryl-undecaprenol N-acetylglucosamine transferase (352 aa).

Ser195 and Gln287 together coordinate UDP-N-acetyl-alpha-D-glucosamine.

It belongs to the glycosyltransferase 28 family. MurG subfamily.

The protein resides in the cell membrane. It carries out the reaction Mur2Ac(oyl-L-Ala-gamma-D-Glu-L-Lys-D-Ala-D-Ala)-di-trans,octa-cis-undecaprenyl diphosphate + UDP-N-acetyl-alpha-D-glucosamine = beta-D-GlcNAc-(1-&gt;4)-Mur2Ac(oyl-L-Ala-gamma-D-Glu-L-Lys-D-Ala-D-Ala)-di-trans,octa-cis-undecaprenyl diphosphate + UDP + H(+). Its pathway is cell wall biogenesis; peptidoglycan biosynthesis. In terms of biological role, cell wall formation. Catalyzes the transfer of a GlcNAc subunit on undecaprenyl-pyrophosphoryl-MurNAc-pentapeptide (lipid intermediate I) to form undecaprenyl-pyrophosphoryl-MurNAc-(pentapeptide)GlcNAc (lipid intermediate II). The sequence is that of UDP-N-acetylglucosamine--N-acetylmuramyl-(pentapeptide) pyrophosphoryl-undecaprenol N-acetylglucosamine transferase from Streptococcus pneumoniae serotype 19F (strain G54).